The sequence spans 83 residues: Delta-conotoxin-like MVIC (83 aa).

The N-terminal stretch at 1-22 (MKLTCVMIVAVLFLTTWTFVTA) is a signal peptide. The propeptide occupies 23–49 (DDSRYGLKNLFPKARHEMKNPEASKLN). 3 disulfides stabilise this stretch: Cys-54/Cys-69, Cys-61/Cys-73, and Cys-68/Cys-78. 4-hydroxyproline occurs at positions 56 and 65.

This sequence belongs to the conotoxin O1 superfamily. In terms of tissue distribution, expressed by the venom duct.

The protein resides in the secreted. In terms of biological role, delta-conotoxins bind to site 6 of voltage-gated sodium channels (Nav) and inhibit the inactivation process. The sequence is that of Delta-conotoxin-like MVIC from Conus magus (Magical cone).